Here is a 218-residue protein sequence, read N- to C-terminus: Adenylate kinase (218 aa).

10 to 15 contacts ATP; that stretch reads GAGKGT. Residues 30–59 form an NMP region; it reads STGDMLRAAIAKGTPLGLSAQKIMESGGLV. AMP contacts are provided by residues T31, R36, 57 to 59, 85 to 88, and Q92; these read GLV and GFPR. The LID stretch occupies residues 122–159; that stretch reads GRRIHQPSGRVYHVVNQPPKNPGVDDITGEPLIQRDDD. ATP is bound by residues R123 and 132 to 133; that span reads VY. R156 and R167 together coordinate AMP. G203 is an ATP binding site.

Belongs to the adenylate kinase family. In terms of assembly, monomer.

The protein resides in the cytoplasm. The enzyme catalyses AMP + ATP = 2 ADP. It functions in the pathway purine metabolism; AMP biosynthesis via salvage pathway; AMP from ADP: step 1/1. In terms of biological role, catalyzes the reversible transfer of the terminal phosphate group between ATP and AMP. Plays an important role in cellular energy homeostasis and in adenine nucleotide metabolism. This Legionella pneumophila (strain Lens) protein is Adenylate kinase.